Reading from the N-terminus, the 811-residue chain is U-box domain-containing protein 43 (811 aa).

In terms of domain architecture, U-box spans 24–103 (NIYEAFICPL…EEWRARNDAL (80 aa)). ARM repeat units lie at residues 136–175 (RKIRQRVCNPQLVRLITDMLKSSSHEVRCKALQTLQVVVE), 178–217 (EESKAIVAEGDTVRTIVKFLSQEPSKGREAAVSVLFELSK), 220–261 (ALCE…NLER), 263–302 (EENVRQMAINGRLQPLLAKLLEGSPETKVSMAFYLGVLAL), 303–342 (NNDVKVIVAQTVGSSLIDLMRTRDMSQREAALGALNNISS), 344–388 (EGSA…NIVN), 399–438 (GPHHQTLVSEEIVENLLQLTSNTGPEIQGKLLAVLVGLTS), 444–484 (INVV…NISP), and 489–528 (ELANALRSTVGQLGSLVSIISENTPTITEEQAAAAGLLAE).

The enzyme catalyses S-ubiquitinyl-[E2 ubiquitin-conjugating enzyme]-L-cysteine + [acceptor protein]-L-lysine = [E2 ubiquitin-conjugating enzyme]-L-cysteine + N(6)-ubiquitinyl-[acceptor protein]-L-lysine.. The protein operates within protein modification; protein ubiquitination. Functions as an E3 ubiquitin ligase. The polypeptide is U-box domain-containing protein 43 (PUB43) (Arabidopsis thaliana (Mouse-ear cress)).